We begin with the raw amino-acid sequence, 815 residues long: Plakophilin-2 (815 aa).

Over residues 1-12 (MLKPHPEHKEQP) the composition is skewed to basic and acidic residues. 2 disordered regions span residues 1 to 31 (MLKP…MAEE) and 76 to 105 (QLTL…ISSS). Residues 13 to 25 (QDSFTPSGDSTPD) are compositionally biased toward polar residues. Residues 91–105 (SSLAESQSSCQISSS) are compositionally biased toward low complexity. 9 ARM repeats span residues 317-357 (KGKP…NQCF), 360-399 (PDAK…NIVF), 402-442 (NENK…NLSS), 457-498 (PLTD…NLSS), 501-547 (PDGR…NLSY), 604-644 (PHGV…NLTA), 652-691 (AIAH…NISR), 693-737 (RELH…NLSQ), and 740-783 (ASNT…TLWR).

The protein belongs to the beta-catenin family.

The protein resides in the nucleus. It is found in the cell junction. Its subcellular location is the desmosome. The protein localises to the cytoplasm. Functionally, required for development of the heart, potentially via cell-cell adhesion and modulation of expression of cardiac precursor genes. Plays a role in desmosome cell-cell junctions and their intracellular connectivity. This is Plakophilin-2 from Danio rerio (Zebrafish).